The chain runs to 561 residues: Tudor and KH domain-containing protein (561 aa).

KH domains lie at 52-115 (DIEI…KAAI) and 124-190 (PVSE…KHLI). Residues K65, K76, K110, K112, K152, K175, K181, K187, K193, K256, and K267 each participate in a glycyl lysine isopeptide (Lys-Gly) (interchain with G-Cter in ubiquitin) cross-link. Residues 219–262 (SVRREDMTEPGGAGEPALWKNTSSSMEPTAPLVTPPPKGGGDMA) are disordered. A Phosphoserine modification is found at S278. In terms of domain architecture, Tudor spans 353 to 412 (TVHVGDIVAAPLPTNGSWYRARVLGTLENGNLDLYFVDFGDNGDCPLKDLRALRSDFLSL). Glycyl lysine isopeptide (Lys-Gly) (interchain with G-Cter in ubiquitin) cross-links involve residues K479, K510, and K529.

Belongs to the Tdrkh family. Interacts with (symmetrically methylated) PIWIL1, PIWIL2 and PIWIL4. In terms of processing, ubiquitinated by PRKN during mitophagy, leading to its degradation and enhancement of mitophagy. Deubiquitinated by USP30.

It localises to the cytoplasm. It is found in the mitochondrion. Its function is as follows. Participates in the primary piRNA biogenesis pathway and is required during spermatogenesis to repress transposable elements and prevent their mobilization, which is essential for the germline integrity. The piRNA metabolic process mediates the repression of transposable elements during meiosis by forming complexes composed of piRNAs and Piwi proteins and govern the methylation and subsequent repression of transposons. Required for the final steps of primary piRNA biogenesis by participating in the processing of 31-37 nt intermediates into mature piRNAs. May act in pi-bodies and piP-bodies by transferring piRNA precursors or intermediates to or between these granules. The sequence is that of Tudor and KH domain-containing protein (TDRKH) from Homo sapiens (Human).